The following is a 501-amino-acid chain: Phenylalanine--tRNA ligase alpha subunit (501 aa).

Residues threonine 344, 383–385 (QID), and phenylalanine 424 each bind L-phenylalanine. Residue glutamate 426 participates in Mg(2+) binding. Phenylalanine 449 provides a ligand contact to L-phenylalanine.

It belongs to the class-II aminoacyl-tRNA synthetase family. Phe-tRNA synthetase alpha subunit type 2 subfamily. Tetramer of two alpha and two beta subunits. Requires Mg(2+) as cofactor.

It is found in the cytoplasm. It catalyses the reaction tRNA(Phe) + L-phenylalanine + ATP = L-phenylalanyl-tRNA(Phe) + AMP + diphosphate + H(+). The protein is Phenylalanine--tRNA ligase alpha subunit of Thermococcus kodakarensis (strain ATCC BAA-918 / JCM 12380 / KOD1) (Pyrococcus kodakaraensis (strain KOD1)).